A 622-amino-acid chain; its full sequence is WD repeat-containing protein 70 (622 aa).

Residues 36 to 55 show a composition bias toward basic and acidic residues; it reads RTAVERSKQTLEAREKEEQL. The interval 36 to 141 is disordered; that stretch reads RTAVERSKQT…DNPVKDIPDS (106 aa). Positions 67–84 are enriched in low complexity; it reads SSSGQKKTKASGSSSGSE. Positions 120-132 are enriched in acidic residues; it reads SDDEDDEEHEDDD. 7 WD repeats span residues 148–187, 195–236, 249–289, 298–337, 344–383, 387–434, and 437–476; these read HGTK…ASLQ, CECH…ECVK, GHTA…KHKG, GKPV…HTKF, TPGT…NPLN, GLEN…KIYE, and VTEA…QRGA. Over residues 508–533 the composition is skewed to basic and acidic residues; the sequence is REPRQRSTRKQLEKDRLDPVKSHKPE. 2 disordered regions span residues 508-549 and 602-622; these read REPR…GTHG and AEVD…KRKI. Over residues 539 to 549 the composition is skewed to gly residues; sequence PGRGGRVGTHG. Residues 604-614 show a composition bias toward acidic residues; that stretch reads VDSDEEEPDNE.

It belongs to the WD repeat GAD-1 family.

The sequence is that of WD repeat-containing protein 70 (wdr70) from Xenopus laevis (African clawed frog).